Reading from the N-terminus, the 137-residue chain is Protein PsiE homolog (137 aa).

A run of 4 helical transmembrane segments spans residues 15–35 (LRITLNLALIMVGFTLVAFLI), 55–75 (YYMTQDILTFFLYFEFIALIV), 82–102 (FHFPLRYFIYIGITAIIRFII), and 108–128 (ATSTLILSGAILLLVAALFLA).

This sequence belongs to the PsiE family.

The protein localises to the cell membrane. This chain is Protein PsiE homolog, found in Listeria innocua serovar 6a (strain ATCC BAA-680 / CLIP 11262).